A 378-amino-acid polypeptide reads, in one-letter code: Transmembrane 6 superfamily member 2 (378 aa).

Transmembrane regions (helical) follow at residues 10–30 (TVAMSFCALPVSYLLNQVSAF), 34–54 (LFVVLTSALILGLLFLAVYSL), 63–83 (PLYAVFVIFSFTSVVDLVIAL), 110–130 (IFICYWDGTVHYLLYLTMAGA), 140–160 (LGLYWLGSFAMSILVFLPGNI), 170–190 (PTFFLAILYMLVPCWAGVRIF), 219–239 (LALIVYLIFAALFTVFRGLVV), 269–289 (MLMYLFYALPFYCLAAYALAF), 291–311 (GCSWLPDWALVFAGAIGQAQF), and 332–352 (TWATFFLSNLLLALGPHLLAF). EXPERA domains lie at 61–186 (YDPL…CWAG) and 217–351 (ADLA…HLLA).

It belongs to the TM6SF family. As to expression, highly expressed in the liver at both the mRNA and protein levels.

The protein localises to the endoplasmic reticulum membrane. It is found in the endoplasmic reticulum-Golgi intermediate compartment membrane. In terms of biological role, regulator of liver fat metabolism influencing triglyceride secretion and hepatic lipid droplet content. May function as sterol isomerase. This is Transmembrane 6 superfamily member 2 (Tm6sf2) from Mus musculus (Mouse).